Here is a 322-residue protein sequence, read N- to C-terminus: UDP-N-acetylenolpyruvoylglucosamine reductase (322 aa).

The 167-residue stretch at 36–202 (RAGGPAQVLF…TSVLFEGVPG (167 aa)) folds into the FAD-binding PCMH-type domain. The active site involves arginine 182. Serine 231 serves as the catalytic Proton donor. The active site involves glutamate 301.

The protein belongs to the MurB family. FAD serves as cofactor.

It localises to the cytoplasm. The catalysed reaction is UDP-N-acetyl-alpha-D-muramate + NADP(+) = UDP-N-acetyl-3-O-(1-carboxyvinyl)-alpha-D-glucosamine + NADPH + H(+). It participates in cell wall biogenesis; peptidoglycan biosynthesis. Functionally, cell wall formation. This Brucella suis biovar 1 (strain 1330) protein is UDP-N-acetylenolpyruvoylglucosamine reductase.